Reading from the N-terminus, the 231-residue chain is MNDPKVVVALDFDRKQDALSFVDKIQPTDARLKVGKEMFTYFGPEFVKQLTGKGFDVFLDLKFHDIPNTVAKAVTAAADLGVWMVNVHASGGSQMMTKAKQALDNYGNDAPLLIAVTVLTSMGQEDLHGLGINKTPAEQVNFLANLTKQSGLDGVVCSAWEAEQLKADLGKEFKLITPGIRPAGSAQDDQQRIMTPKQAIDVGVDYLVIGRPITKAVDPQLVLQQINGTIR.

Substrate contacts are provided by residues Asp11, Lys33, 60-69 (DLKFHDIPNT), Thr120, Arg181, Gln190, Gly210, and Arg211. Lys62 acts as the Proton donor in catalysis.

It belongs to the OMP decarboxylase family. Type 1 subfamily. As to quaternary structure, homodimer.

It carries out the reaction orotidine 5'-phosphate + H(+) = UMP + CO2. It functions in the pathway pyrimidine metabolism; UMP biosynthesis via de novo pathway; UMP from orotate: step 2/2. Catalyzes the decarboxylation of orotidine 5'-monophosphate (OMP) to uridine 5'-monophosphate (UMP). This chain is Orotidine 5'-phosphate decarboxylase, found in Colwellia psychrerythraea (strain 34H / ATCC BAA-681) (Vibrio psychroerythus).